A 395-amino-acid chain; its full sequence is Mannan polymerase complexes subunit MNN9 (395 aa).

The Cytoplasmic portion of the chain corresponds to 2–17 (SLSLVSYRLRKNPWVN). A helical; Signal-anchor for type II membrane protein membrane pass occupies residues 18 to 33 (IFLPVLAIFLIYIIFF). Over 34 to 395 (QRDQSLLGLN…LVYHIEEENH (362 aa)) the chain is Lumenal.

It belongs to the ANP1/MMN9/VAN1 family. The M-Pol I complex contains MNN9 and VAN1. The M-Pol II complex is composed of ANP1, MNN9, MNN10, MNN11 and HOC1.

It localises to the endoplasmic reticulum membrane. Its subcellular location is the golgi apparatus membrane. Its pathway is protein modification; protein glycosylation. In terms of biological role, the M-Pol I and M-Pol II complexes possess alpha-1,6-mannosyltransferase activity and are probably involved in the elongation of the mannan backbone of N-linked glycans on cell wall and periplasmic proteins. May also provide alpha-1,2-mannosyltransferase activity to the M-Pol I complex. The protein is Mannan polymerase complexes subunit MNN9 (MNN9) of Saccharomyces cerevisiae (strain ATCC 204508 / S288c) (Baker's yeast).